A 107-amino-acid chain; its full sequence is Heme-degrading monooxygenase (107 aa).

In terms of domain architecture, ABM spans 2–93 (VIVANKTLIR…DYILGNEIEF (92 aa)). A Fe cation-binding site is contributed by Asn6. His76 is a heme binding site.

Belongs to the antibiotic biosynthesis monooxygenase family. Heme-degrading monooxygenase IsdG subfamily. In terms of assembly, homodimer.

It is found in the cytoplasm. It catalyses the reaction heme b + 3 reduced [NADPH--hemoprotein reductase] + 3 O2 = biliverdin IXalpha + CO + Fe(2+) + 3 oxidized [NADPH--hemoprotein reductase] + 3 H2O + H(+). Allows bacterial pathogens to use the host heme as an iron source. Catalyzes the oxidative degradation of the heme macrocyclic porphyrin ring to the biliverdin in the presence of a suitable electron donor such as ascorbate or NADPH--cytochrome P450 reductase, with subsequent release of free iron. The chain is Heme-degrading monooxygenase from Shouchella clausii (strain KSM-K16) (Alkalihalobacillus clausii).